A 388-amino-acid chain; its full sequence is MGRVGVLLLNLGGPDKLEDVAPFLFNLFSDPEIIRLPFRWLQKPLAWFIASRRTKTSQENYKQIGGGSPLRRITEAQGEALKEQLHYLGQEANIYVGMRYWHPYTEEAIALLTQDNLDNLVILPLYPQFSISTSGSSFRLLERLWQEDPKLQRLEYTVIPSWYKEPGYLQAMAELIRQEIEQFPHPDQVHVFFSAHGVPKSYVEEAGDPYQQEIEECTALIMQTLNRPNPHTLAYQSRVGPVEWLQPYTEDALKELGAQGVKDLVVVPISFVSEHIETLQEIDIEYREIAEEAGIHNFRRVPAPNTHPVFIRALADLVIDALNKPSFKLSQAAQIKKMVKMYPPESWEWGMTSSAEVWNGRIAMLGFIALIIELVTGQGLLHMIGLLQ.

Residues H196 and E277 each coordinate Fe cation.

Belongs to the ferrochelatase family.

The protein resides in the cytoplasm. The enzyme catalyses heme b + 2 H(+) = protoporphyrin IX + Fe(2+). It functions in the pathway porphyrin-containing compound metabolism; protoheme biosynthesis; protoheme from protoporphyrin-IX: step 1/1. Its function is as follows. Catalyzes the ferrous insertion into protoporphyrin IX. This chain is Ferrochelatase, found in Nostoc sp. (strain PCC 7120 / SAG 25.82 / UTEX 2576).